The following is a 348-amino-acid chain: Holliday junction branch migration complex subunit RuvB (348 aa).

A large ATPase domain (RuvB-L) region spans residues 4-186; it reads TDRIISANTV…FGIIQRLEFY (183 aa). ATP-binding positions include isoleucine 25, arginine 26, glycine 67, lysine 70, threonine 71, threonine 72, 133–135, arginine 176, tyrosine 186, and arginine 223; that span reads EDY. Threonine 71 provides a ligand contact to Mg(2+). Residues 187–257 form a small ATPAse domain (RuvB-S) region; sequence SVDDLAKIVY…IADKALTMLK (71 aa). The tract at residues 260–348 is head domain (RuvB-H); sequence PVGFDHMDHK…SSDQQQNLSL (89 aa). Arginine 315 and arginine 320 together coordinate DNA.

It belongs to the RuvB family. Homohexamer. Forms an RuvA(8)-RuvB(12)-Holliday junction (HJ) complex. HJ DNA is sandwiched between 2 RuvA tetramers; dsDNA enters through RuvA and exits via RuvB. An RuvB hexamer assembles on each DNA strand where it exits the tetramer. Each RuvB hexamer is contacted by two RuvA subunits (via domain III) on 2 adjacent RuvB subunits; this complex drives branch migration. In the full resolvosome a probable DNA-RuvA(4)-RuvB(12)-RuvC(2) complex forms which resolves the HJ.

The protein localises to the cytoplasm. The catalysed reaction is ATP + H2O = ADP + phosphate + H(+). Its function is as follows. The RuvA-RuvB-RuvC complex processes Holliday junction (HJ) DNA during genetic recombination and DNA repair, while the RuvA-RuvB complex plays an important role in the rescue of blocked DNA replication forks via replication fork reversal (RFR). RuvA specifically binds to HJ cruciform DNA, conferring on it an open structure. The RuvB hexamer acts as an ATP-dependent pump, pulling dsDNA into and through the RuvAB complex. RuvB forms 2 homohexamers on either side of HJ DNA bound by 1 or 2 RuvA tetramers; 4 subunits per hexamer contact DNA at a time. Coordinated motions by a converter formed by DNA-disengaged RuvB subunits stimulates ATP hydrolysis and nucleotide exchange. Immobilization of the converter enables RuvB to convert the ATP-contained energy into a lever motion, pulling 2 nucleotides of DNA out of the RuvA tetramer per ATP hydrolyzed, thus driving DNA branch migration. The RuvB motors rotate together with the DNA substrate, which together with the progressing nucleotide cycle form the mechanistic basis for DNA recombination by continuous HJ branch migration. Branch migration allows RuvC to scan DNA until it finds its consensus sequence, where it cleaves and resolves cruciform DNA. This chain is Holliday junction branch migration complex subunit RuvB, found in Francisella philomiragia subsp. philomiragia (strain ATCC 25017 / CCUG 19701 / FSC 153 / O#319-036).